The primary structure comprises 284 residues: Diaminopimelate epimerase (284 aa).

The substrate site is built by N20, Q53, and N73. The active-site Proton donor is C82. Substrate is bound by residues 83–84, N167, N200, and 218–219; these read GN and ER. Residue C227 is the Proton acceptor of the active site. Substrate is bound at residue 228–229; it reads GS.

This sequence belongs to the diaminopimelate epimerase family. In terms of assembly, homodimer.

Its subcellular location is the cytoplasm. It carries out the reaction (2S,6S)-2,6-diaminopimelate = meso-2,6-diaminopimelate. The protein operates within amino-acid biosynthesis; L-lysine biosynthesis via DAP pathway; DL-2,6-diaminopimelate from LL-2,6-diaminopimelate: step 1/1. Catalyzes the stereoinversion of LL-2,6-diaminopimelate (L,L-DAP) to meso-diaminopimelate (meso-DAP), a precursor of L-lysine and an essential component of the bacterial peptidoglycan. The sequence is that of Diaminopimelate epimerase from Xylella fastidiosa (strain 9a5c).